The chain runs to 626 residues: Acetolactate synthase large subunit (626 aa).

The span at 1–13 shows a compositional bias: polar residues; it reads MNVAASQQPTPAT. The tract at residues 1-23 is disordered; that stretch reads MNVAASQQPTPATVASRGRSAAP. Residue glutamate 73 coordinates thiamine diphosphate. FAD is bound by residues arginine 175, 281–302, and 324–343; these read HGTV…IGSR and DIDP…IVGD. A thiamine pyrophosphate binding region spans residues 416-496; it reads QHQMWAAQFV…IKIALINNGN (81 aa). Mg(2+) contacts are provided by aspartate 467 and asparagine 494.

It belongs to the TPP enzyme family. As to quaternary structure, dimer of large and small chains. Mg(2+) serves as cofactor. It depends on thiamine diphosphate as a cofactor.

It carries out the reaction 2 pyruvate + H(+) = (2S)-2-acetolactate + CO2. Its pathway is amino-acid biosynthesis; L-isoleucine biosynthesis; L-isoleucine from 2-oxobutanoate: step 1/4. The protein operates within amino-acid biosynthesis; L-valine biosynthesis; L-valine from pyruvate: step 1/4. The chain is Acetolactate synthase large subunit (ilvB) from Corynebacterium glutamicum (strain ATCC 13032 / DSM 20300 / JCM 1318 / BCRC 11384 / CCUG 27702 / LMG 3730 / NBRC 12168 / NCIMB 10025 / NRRL B-2784 / 534).